Consider the following 78-residue polypeptide: U7-lycotoxin-Ls1e (78 aa).

Residues 1–22 (MKLIIFTGLALLLIVSLIDVEA) form the signal peptide. Positions 23-26 (QNEG) are excised as a propeptide.

This sequence belongs to the neurotoxin 19 (CSTX) family. 07 (U7-Lctx) subfamily. Post-translationally, contains 4 disulfide bonds. Expressed by the venom gland.

The protein resides in the secreted. The sequence is that of U7-lycotoxin-Ls1e from Lycosa singoriensis (Wolf spider).